The primary structure comprises 214 residues: ER lumen protein-retaining receptor 3 (214 aa).

Residues 1 to 4 are Lumenal-facing; it reads MNVF. Residues 5–24 form a helical membrane-spanning segment; sequence RISGDVSHLLAIIILLLKMW. Topologically, residues 25 to 32 are cytoplasmic; sequence KSKSCAGI. The helical transmembrane segment at 33 to 52 threads the bilayer; the sequence is SGKSQLLFALVFTTRYLDLF. Positions 47-48 are interaction with the K-D-E-L motif on target proteins; it reads RY. Residues 53–58 lie on the Lumenal side of the membrane; it reads TVFISA. A helical membrane pass occupies residues 59–79; that stretch reads YNTVMKIVFLVCAYVTVYLIY. Over 80–92 the chain is Cytoplasmic; it reads GKFRKAYDSENDT. Residues 93–110 form a helical membrane-spanning segment; it reads FRLEFLLVPVIGLSFLEN. Residues 111–116 are Lumenal-facing; that stretch reads YEFTPL. The chain crosses the membrane as a helical span at residues 117-135; that stretch reads EILWTFSIYLESVAILPQL. Residues 136 to 149 are Cytoplasmic-facing; it reads FMISKTGEAESITT. Residues 150–168 form a helical membrane-spanning segment; sequence HYLFFLGLYRVLYLANWIW. Positions 159–169 are interaction with the K-D-E-L motif on target proteins; it reads RVLYLANWIWR. The Lumenal segment spans residues 169-178; the sequence is RYHTEKFYDQ. A helical transmembrane segment spans residues 179-199; the sequence is IAVVSGVVQTIFYFDFFYLYI. Residues 200–214 lie on the Cytoplasmic side of the membrane; the sequence is TKVLKGKKLSLPMPV. Residues 204–207 are important for recycling of cargo proteins with the sequence motif K-D-E-L from the Golgi to the endoplasmic reticulum; sequence KGKK.

It belongs to the ERD2 family.

It localises to the endoplasmic reticulum membrane. Its subcellular location is the golgi apparatus membrane. It is found in the cytoplasmic vesicle. The protein localises to the COPI-coated vesicle membrane. Its function is as follows. Receptor for the C-terminal sequence motif K-D-E-L that is present on endoplasmic reticulum resident proteins and that mediates their recycling from the Golgi back to the endoplasmic reticulum. In Xenopus tropicalis (Western clawed frog), this protein is ER lumen protein-retaining receptor 3 (kdelr3).